Here is a 371-residue protein sequence, read N- to C-terminus: Methionine import ATP-binding protein MetN (371 aa).

A disordered region spans residues 1 to 22 (MSEPFMNAPWQPPGDHPALKSP). Residues 27–268 (ILIDSVRKLY…PRHEVTRRFV (242 aa)) enclose the ABC transporter domain. ATP is bound at residue 65–72 (GRSGAGKS).

This sequence belongs to the ABC transporter superfamily. Methionine importer (TC 3.A.1.24) family. The complex is composed of two ATP-binding proteins (MetN), two transmembrane proteins (MetI) and a solute-binding protein (MetQ).

It localises to the cell inner membrane. It catalyses the reaction L-methionine(out) + ATP + H2O = L-methionine(in) + ADP + phosphate + H(+). It carries out the reaction D-methionine(out) + ATP + H2O = D-methionine(in) + ADP + phosphate + H(+). In terms of biological role, part of the ABC transporter complex MetNIQ involved in methionine import. Responsible for energy coupling to the transport system. The polypeptide is Methionine import ATP-binding protein MetN (Rhodopseudomonas palustris (strain BisB5)).